The primary structure comprises 209 residues: Protein ASG7 (209 aa).

The Lumenal portion of the chain corresponds to 1–49 (MTTLASSIEHKTKHLAAPFENDENPWMKKYCCQCKSCKMSVPVQPWLPR). The helical transmembrane segment at 50–70 (FFVFGILCPVFWLVNLLAWWF) threads the bilayer. Residues 71–184 (LQYWQPHELE…LLRKTFRDWN (114 aa)) lie on the Cytoplasmic side of the membrane. A phosphoserine mark is found at serine 121, serine 123, and serine 125. Threonine 153 carries the post-translational modification Phosphothreonine. The chain crosses the membrane as a helical span at residues 185-205 (LRSLLGLLIDSILIIFVVLLC). The Lumenal segment spans residues 206–209 (KKSR).

The protein resides in the endomembrane system. Required for receptor inhibition of inappropriately expressed a-factor receptor (STE3) in MAT a cells. Inhibits signaling by relocalizing the G protein beta-gamma (STE4-STE18) subunit to intracellular membranes. May also be a mechanism for the down-regulation of the mating pheromone response after the zygotic fusion event, promoting the transition of the new diploid cell to vegetative growth. The protein is Protein ASG7 (ASG7) of Saccharomyces cerevisiae (strain ATCC 204508 / S288c) (Baker's yeast).